Reading from the N-terminus, the 50-residue chain is Fungus-induced-related protein 15 (50 aa).

Positions 1-21 (MNFYSLFVFIALIFSFNVVHG) are cleaved as a signal peptide.

Functionally, may have role in hypoxia response. The protein is Fungus-induced-related protein 15 (fipr-15) of Caenorhabditis elegans.